A 170-amino-acid polypeptide reads, in one-letter code: Protein ripply3 (170 aa).

The WRPW motif motif lies at 40-43 (WRPW). The ripply homology domain stretch occupies residues 79–114 (HPVRLYMPKSKTSEYLQHMGKKVLANFPVQATIHFY). Residues 143 to 152 (VNSSRGSGDN) are compositionally biased toward polar residues. The disordered stretch occupies residues 143-170 (VNSSRGSGDNYSVPGGPKRNISSHTGSA).

Belongs to the ripply family. Interacts with tbx1 and tle4/grg4.

The protein localises to the nucleus. Its function is as follows. Acts as a transcriptional corepressor. Negative regulator of the transcriptional activity of tbx1 that plays a key role in pharyngeal development. Plays a role in the formation of the anteroposterior (AP) axis during embryonic development; required to establish the posterolateral border of the pre-placodal ectoderm (PPE) acting downstream of the retinoic acid receptor (RAR) signaling. The polypeptide is Protein ripply3 (Xenopus tropicalis (Western clawed frog)).